Consider the following 91-residue polypeptide: Small ribosomal subunit protein uS19m (91 aa).

The protein belongs to the universal ribosomal protein uS19 family. In terms of assembly, component of the mitochondrial small ribosomal subunit (mt-SSU). Mature N.crassa 74S mitochondrial ribosomes consist of a small (37S) and a large (54S) subunit. The 37S small subunit contains a 16S ribosomal RNA (16S mt-rRNA) and 32 different proteins. The 54S large subunit contains a 23S rRNA (23S mt-rRNA) and 42 different proteins.

The protein resides in the mitochondrion. Its function is as follows. Component of the mitochondrial ribosome (mitoribosome), a dedicated translation machinery responsible for the synthesis of mitochondrial genome-encoded proteins, including at least some of the essential transmembrane subunits of the mitochondrial respiratory chain. The mitoribosomes are attached to the mitochondrial inner membrane and translation products are cotranslationally integrated into the membrane. The polypeptide is Small ribosomal subunit protein uS19m (rsm19) (Neurospora crassa (strain ATCC 24698 / 74-OR23-1A / CBS 708.71 / DSM 1257 / FGSC 987)).